Reading from the N-terminus, the 51-residue chain is Lantibiotic streptococcin A-FF22 (51 aa).

The propeptide occupies 1-25 (MEKNNEVINSIQEVSLEELDQIIGA). 2 consecutive cross-links (beta-methyllanthionine (Thr-Cys)) follow at residues 33 to 38 (TISHEC) and 42 to 50 (TWAFLATCC). The lanthionine (Ser-Cys) cross-link spans 35 to 49 (SHECHLNTWAFLATC). Thr48 bears the 2,3-didehydrobutyrine mark.

It belongs to the type A lantibiotic family. Maturation of lantibiotics involves the enzymatic conversion of Thr, and Ser into dehydrated AA and the formation of thioether bonds with cysteine. This is followed by membrane translocation and cleavage of the modified precursor.

The protein resides in the secreted. It localises to the cell surface. Its function is as follows. Lanthionine-containing peptide antibiotic (lantibiotic) active on certain Gram-positive bacteria. The bactericidal activity of lantibiotics is based on depolarization of energized bacterial cytoplasmic membranes, initiated by the formation of aqueous transmembrane pores. This chain is Lantibiotic streptococcin A-FF22 (scnA), found in Streptococcus pyogenes.